We begin with the raw amino-acid sequence, 589 residues long: Protein drl-1 (589 aa).

Residues 1-51 are disordered; the sequence is MHSEEKYLHIPNNTKYPEIIVEEEEEDPSEEERSELSETDDVATPLRPSDT. Acidic residues predominate over residues 20–41; the sequence is IVEEEEEDPSEEERSELSETDD. Positions 97–373 constitute a Protein kinase domain; that stretch reads WRINEDVMKD…QNLLESHGSK (277 aa). A run of 3 helical transmembrane segments spans residues 429–449, 456–476, and 491–511; these read GFIPFIRWYMSRILIFSVLLV, LCAALSLAAVAGGVFFAIFLI, and GFVVLIALILLPIIILLTTLC.

This sequence belongs to the protein kinase superfamily. STE Ser/Thr protein kinase family. In terms of tissue distribution, expressed in vulval and body wall muscles, hypodermis, seam cells and tissues next to pharynx and anus.

It is found in the membrane. Functionally, negatively regulates lifespan and health span probably by participating in nutrient sensing. In Caenorhabditis elegans, this protein is Protein drl-1.